A 303-amino-acid chain; its full sequence is uncharacterized protein (303 aa).

Ser63 is modified (phosphoserine).

This sequence belongs to the HAD-like hydrolase superfamily.

It localises to the cytoplasm. Its subcellular location is the nucleus. This is an uncharacterized protein from Schizosaccharomyces pombe (strain 972 / ATCC 24843) (Fission yeast).